The primary structure comprises 244 residues: NAD-dependent protein deacetylase (244 aa).

A Deacetylase sirtuin-type domain is found at 1 to 244 (MSATERQLQY…IGDTCRQLRA (244 aa)). 8 residues coordinate NAD(+): A27, T31, F38, R39, Q107, I109, D110, and H125. F38 is a nicotinamide binding site. Nicotinamide-binding residues include I109 and D110. Residue H125 is the Proton acceptor of the active site. Residues C133, C136, C153, and C156 each contribute to the Zn(2+) site. Positions 192, 193, 217, and 235 each coordinate NAD(+).

It belongs to the sirtuin family. Class U subfamily. Zn(2+) is required as a cofactor.

The protein localises to the cytoplasm. The enzyme catalyses N(6)-acetyl-L-lysyl-[protein] + NAD(+) + H2O = 2''-O-acetyl-ADP-D-ribose + nicotinamide + L-lysyl-[protein]. Its function is as follows. NAD-dependent protein deacetylase which modulates the activities of several enzymes which are inactive in their acetylated form. This Chromobacterium violaceum (strain ATCC 12472 / DSM 30191 / JCM 1249 / CCUG 213 / NBRC 12614 / NCIMB 9131 / NCTC 9757 / MK) protein is NAD-dependent protein deacetylase.